Here is a 122-residue protein sequence, read N- to C-terminus: Large ribosomal subunit protein uL14 (122 aa).

Belongs to the universal ribosomal protein uL14 family. Part of the 50S ribosomal subunit. Forms a cluster with proteins L3 and L19. In the 70S ribosome, L14 and L19 interact and together make contacts with the 16S rRNA in bridges B5 and B8.

Binds to 23S rRNA. Forms part of two intersubunit bridges in the 70S ribosome. The chain is Large ribosomal subunit protein uL14 from Parvibaculum lavamentivorans (strain DS-1 / DSM 13023 / NCIMB 13966).